We begin with the raw amino-acid sequence, 86 residues long: Large ribosomal subunit protein eL20 (86 aa).

Belongs to the eukaryotic ribosomal protein eL20 family. As to quaternary structure, part of the 50S ribosomal subunit. Binds 23S rRNA.

This is Large ribosomal subunit protein eL20 from Metallosphaera sedula (strain ATCC 51363 / DSM 5348 / JCM 9185 / NBRC 15509 / TH2).